The chain runs to 599 residues: MKYKKKNILFITTIIVIYLAFLFNWLEIGIFKPKGESISESEMLSKISRKDISESVRYSVYKTMFLKDKPFDIRNVYQIELTTHNNEKFHAEIIKNTKEELSFELLPRNKISYQYEFRPFSWLLSIFSILLNFINVLSSLVFTIYIFLAIHRESGKLNSKSLITSKQKSLFTFKDVAGNTEEKEEMTELIDFLKQPQKYETIGAAIPRGVLLEGPPGTGKTLLAKALAGEASVPFYAVSGSEFVEMYVGVGASRVRKLFKEAKLNAPCVLFIDEIDVLGGRRGGNSSGGNQEKDQTLNQLLTEMDGFTPSQGIIVIGATNRADMLDAALLRPGRFDRKILVNLPDIKSRAEILKLHAQNKKLSSDIDFHQLAQQTPGMSGAQLAAVLNEASILTVRNHKDFITMTELSEALDRVLMGPAKKSIKYDPEERRMVAYHEAGHAVIGIKLKHAQKVQKITIIPRGNAGGYNLMMPEKETFFSSRKRMLAQIQSFLGGRVAEELVFDDISSGAFDDFRQATKIARLMVTKYGMSDLGVSQDSEFSDKKLIDTAIKKIIDNCYARTKHLMLENKTLLDQIAHLLLEQETITQAEIEQLVVNTKK.

Residues 1–7 (MKYKKKN) are Cytoplasmic-facing. A helical membrane pass occupies residues 8-28 (ILFITTIIVIYLAFLFNWLEI). At 29-128 (GIFKPKGESI…PFSWLLSIFS (100 aa)) the chain is on the extracellular side. A helical membrane pass occupies residues 129–149 (ILLNFINVLSSLVFTIYIFLA). Over 150–599 (IHRESGKLNS…IEQLVVNTKK (450 aa)) the chain is Cytoplasmic. An ATP-binding site is contributed by 214–221 (GPPGTGKT). His-436 contacts Zn(2+). Glu-437 is a catalytic residue. His-440 and Asp-512 together coordinate Zn(2+).

In the central section; belongs to the AAA ATPase family. The protein in the C-terminal section; belongs to the peptidase M41 family. Homohexamer. It depends on Zn(2+) as a cofactor.

The protein resides in the cell membrane. Acts as a processive, ATP-dependent zinc metallopeptidase for both cytoplasmic and membrane proteins. Plays a role in the quality control of integral membrane proteins. This is ATP-dependent zinc metalloprotease FtsH 3 from Phytoplasma mali (strain AT).